Reading from the N-terminus, the 330-residue chain is Olfactory receptor 11H6 (330 aa).

At 1-43 (MFFIIHSLVTSVFLTALGPQNRTMHFVTEFVLLGFHGQREMQS) the chain is on the extracellular side. An N-linked (GlcNAc...) asparagine glycan is attached at Asn-21. Residues 44 to 64 (CFFSFILVLYLLTLLGNGAIV) traverse the membrane as a helical segment. At 65 to 72 (CAVKLDRR) the chain is on the cytoplasmic side. Residues 73–93 (LHTPMYILLGNFAFLEIWYIS) traverse the membrane as a helical segment. Residues 94–117 (STVPNMLVNILSEIKTISFSGCFL) lie on the Extracellular side of the membrane. Cysteines 115 and 207 form a disulfide. The helical transmembrane segment at 118-138 (QFYFFFSLGTTECFFLSVMAY) threads the bilayer. Residues 139–157 (DRYLAICRPLHYPSIMTGK) lie on the Cytoplasmic side of the membrane. The helical transmembrane segment at 158 to 178 (FCIILVCVCWVGGFLCYPVPI) threads the bilayer. Residues 179 to 215 (VLISQLPFCGPNIIDHLVCDPGPLFALACISAPSTEL) lie on the Extracellular side of the membrane. The helical transmembrane segment at 216 to 235 (ICYTFNSMIIFGPFLSILGS) threads the bilayer. Over 236-255 (YTLVIRAVLCIPSGAGRTKA) the chain is Cytoplasmic. Residues 256 to 276 (FSTCGSHLMVVSLFYGTLMVM) form a helical membrane-spanning segment. The Extracellular portion of the chain corresponds to 277-289 (YVSPTSGNPAGMQ). Residues 290 to 310 (KIITLVYTAMTPFLNPLIYSL) form a helical membrane-spanning segment. Residues 311–330 (RNKDMKDALKRVLGLTVSQN) are Cytoplasmic-facing.

It belongs to the G-protein coupled receptor 1 family.

The protein localises to the cell membrane. In terms of biological role, odorant receptor. This chain is Olfactory receptor 11H6 (OR11H6), found in Homo sapiens (Human).